Here is a 180-residue protein sequence, read N- to C-terminus: Shikimate kinase (180 aa).

ATP is bound at residue 14-19 (GAGKSS). A Mg(2+)-binding site is contributed by serine 18. 3 residues coordinate substrate: aspartate 36, arginine 60, and glycine 82. Arginine 120 lines the ATP pocket. Substrate is bound at residue arginine 139.

It belongs to the shikimate kinase family. Monomer. Mg(2+) serves as cofactor.

The protein resides in the cytoplasm. It carries out the reaction shikimate + ATP = 3-phosphoshikimate + ADP + H(+). It functions in the pathway metabolic intermediate biosynthesis; chorismate biosynthesis; chorismate from D-erythrose 4-phosphate and phosphoenolpyruvate: step 5/7. Functionally, catalyzes the specific phosphorylation of the 3-hydroxyl group of shikimic acid using ATP as a cosubstrate. The polypeptide is Shikimate kinase (Xylella fastidiosa (strain 9a5c)).